The primary structure comprises 728 residues: Catalase-peroxidase (728 aa).

A cross-link (tryptophyl-tyrosyl-methioninium (Trp-Tyr) (with M-244)) is located at residues 91 to 218; sequence WHSAGTYRTA…LAAVQMGLIY (128 aa). The active-site Proton acceptor is the histidine 92. Positions 218–244 form a cross-link, tryptophyl-tyrosyl-methioninium (Tyr-Met) (with W-91); sequence YVNPEGPDGNPDPVAAARDIRDTFARM. Histidine 259 is a binding site for heme b.

This sequence belongs to the peroxidase family. Peroxidase/catalase subfamily. In terms of assembly, homodimer or homotetramer. Heme b serves as cofactor. Formation of the three residue Trp-Tyr-Met cross-link is important for the catalase, but not the peroxidase activity of the enzyme.

It catalyses the reaction H2O2 + AH2 = A + 2 H2O. The enzyme catalyses 2 H2O2 = O2 + 2 H2O. Functionally, bifunctional enzyme with both catalase and broad-spectrum peroxidase activity. The sequence is that of Catalase-peroxidase from Burkholderia thailandensis (strain ATCC 700388 / DSM 13276 / CCUG 48851 / CIP 106301 / E264).